Here is a 442-residue protein sequence, read N- to C-terminus: Putative FNIP repeat-containing protein L170 (442 aa).

FNIP repeat units lie at residues 213 to 252, 253 to 294, and 295 to 348; these read FNSS…IGRG, FNSE…LGCF, and FNQS…FGMY.

This is Putative FNIP repeat-containing protein L170 from Acanthamoeba polyphaga mimivirus (APMV).